Reading from the N-terminus, the 943-residue chain is Valine--tRNA ligase (943 aa).

The short motif at 45–55 is the 'HIGH' region element; sequence PNVTGTLHMGH. A 'KMSKS' region motif is present at residues 541-545; it reads KMSKS. Lys-544 lines the ATP pocket. Positions 875 to 934 form a coiled coil; sequence IDVAAERIRLAKEIEKLEKQISIAQGKLANEGFVARAPAAVIDQEKQRVADFTATLEQLK.

This sequence belongs to the class-I aminoacyl-tRNA synthetase family. ValS type 1 subfamily. Monomer.

The protein localises to the cytoplasm. The enzyme catalyses tRNA(Val) + L-valine + ATP = L-valyl-tRNA(Val) + AMP + diphosphate. Functionally, catalyzes the attachment of valine to tRNA(Val). As ValRS can inadvertently accommodate and process structurally similar amino acids such as threonine, to avoid such errors, it has a 'posttransfer' editing activity that hydrolyzes mischarged Thr-tRNA(Val) in a tRNA-dependent manner. The chain is Valine--tRNA ligase from Dechloromonas aromatica (strain RCB).